Consider the following 226-residue polypeptide: PKHD-type hydroxylase Sfri_0612 (226 aa).

In terms of domain architecture, Fe2OG dioxygenase spans 77–177; that stretch reads KIFPPCFNRY…RIAAITWMQS (101 aa). Residues H95, D97, and H158 each contribute to the Fe cation site. R168 serves as a coordination point for 2-oxoglutarate.

The cofactor is Fe(2+). It depends on L-ascorbate as a cofactor.

This Shewanella frigidimarina (strain NCIMB 400) protein is PKHD-type hydroxylase Sfri_0612.